A 281-amino-acid polypeptide reads, in one-letter code: Hexaprenyl pyrophosphate synthase (281 aa).

Isopentenyl diphosphate-binding residues include K42, R45, and H74. Mg(2+)-binding residues include D81 and D85. Isopentenyl diphosphate is bound at residue R91.

It belongs to the FPP/GGPP synthase family. As to quaternary structure, homodimer. Mg(2+) serves as cofactor.

It carries out the reaction 2 isopentenyl diphosphate + (2E,6E,10E)-geranylgeranyl diphosphate = all-trans-hexaprenyl diphosphate + 2 diphosphate. Catalyzes consecutive E-type condensation of two isopentenyl pyrophosphate (IPP) molecules with an allylic substrate such as geranylgeranyl diphosphate (GGPP), farnesyl diphosphate (FPP) or geranyl diphosphate (GPP) to yield the medium-chain product trans-C30-hexaprenyl pyrophosphate (HexPP). GGPP is the physiological substrate. The protein is Hexaprenyl pyrophosphate synthase (gdS-2) of Saccharolobus solfataricus (strain ATCC 35092 / DSM 1617 / JCM 11322 / P2) (Sulfolobus solfataricus).